Here is a 289-residue protein sequence, read N- to C-terminus: Diaminopimelate epimerase (289 aa).

3 residues coordinate substrate: Asn13, Gln47, and Asn67. Catalysis depends on Cys76, which acts as the Proton donor. Substrate contacts are provided by residues 77-78 (GN), Asn167, Asn200, and 218-219 (ER). The active-site Proton acceptor is the Cys227. 228–229 (GT) is a substrate binding site.

The protein belongs to the diaminopimelate epimerase family. Homodimer.

It is found in the cytoplasm. It carries out the reaction (2S,6S)-2,6-diaminopimelate = meso-2,6-diaminopimelate. Its pathway is amino-acid biosynthesis; L-lysine biosynthesis via DAP pathway; DL-2,6-diaminopimelate from LL-2,6-diaminopimelate: step 1/1. Catalyzes the stereoinversion of LL-2,6-diaminopimelate (L,L-DAP) to meso-diaminopimelate (meso-DAP), a precursor of L-lysine and an essential component of the bacterial peptidoglycan. This Burkholderia mallei (strain NCTC 10247) protein is Diaminopimelate epimerase.